A 167-amino-acid chain; its full sequence is Lipoprotein signal peptidase (167 aa).

2 helical membrane passes run 56–76 (FAPP…VLVF) and 84–104 (TPIF…NMID). Catalysis depends on residues aspartate 113 and aspartate 139. A helical transmembrane segment spans residues 132 to 152 (WPIFNVADSAITIGACMLVLF).

Belongs to the peptidase A8 family.

It localises to the cell inner membrane. The enzyme catalyses Release of signal peptides from bacterial membrane prolipoproteins. Hydrolyzes -Xaa-Yaa-Zaa-|-(S,diacylglyceryl)Cys-, in which Xaa is hydrophobic (preferably Leu), and Yaa (Ala or Ser) and Zaa (Gly or Ala) have small, neutral side chains.. It participates in protein modification; lipoprotein biosynthesis (signal peptide cleavage). This protein specifically catalyzes the removal of signal peptides from prolipoproteins. The polypeptide is Lipoprotein signal peptidase (Chlorobium luteolum (strain DSM 273 / BCRC 81028 / 2530) (Pelodictyon luteolum)).